The chain runs to 216 residues: LexA repressor (216 aa).

Positions 28 to 48 form a DNA-binding region, H-T-H motif; the sequence is RAEIAAEFGFSSPNAAEEHLR. Catalysis depends on for autocatalytic cleavage activity residues S134 and K171.

Belongs to the peptidase S24 family. Homodimer.

It catalyses the reaction Hydrolysis of Ala-|-Gly bond in repressor LexA.. Represses a number of genes involved in the response to DNA damage (SOS response), including recA and lexA. In the presence of single-stranded DNA, RecA interacts with LexA causing an autocatalytic cleavage which disrupts the DNA-binding part of LexA, leading to derepression of the SOS regulon and eventually DNA repair. The polypeptide is LexA repressor (Ralstonia pickettii (strain 12J)).